Reading from the N-terminus, the 807-residue chain is MPKQDSLWLKSLRWIQKHLVHTIVVPQDPFADLNLDASRPLAYVMKTESLSDIAALSEITTKLGLPSPYEPLVVNGVVAPRVVCLEGRKPLFGERASNEPFLECFMRLLAVHKEKPELDIQLVPVSLYWGRTPGKEDDTMKAAVLERENPTWLRKCLMILFLGRHNFVQFSNAVSLRYMADEHGTDMGIAHKLARVARVHFRRQRKVMTGPVLPNRQAMFHSLLKSESLRKAIQEEAASKKISETQARETAIEYLDEIAANYSDSLVRIAERFLTWLWNKLYSGINIKGAEQIRQLHHDGHEIVYVPCHRSHMDYLLLSYILYYQGMVPPHIAAGINLNFWPAGPLFRRGGAFFIRRSFNGNKLYTAVFREYLDQLFAKGYSVEYFSEGGRSRTGRLLAPKTGMIAMTINSVLRGIERPVTLVPVYLGYDHVMEVATYHKELSGKKKQKESVWQVFGAIRKLGNFGQGYVNFGEPITLQNFLNETAPNWRTEVADDPEQKPTWLTPAVNVLANRVMTRINDAAAASSITLTSLVLLASEQNALERCLLERQLDLYLTLLKRVPYTSFTSVAEGDGKHLVQQGLELNKFSIHADPLGEIVSIDANQAISMTYYRNNIIHLFIIPSLIASCLTNNKQISRAHILGIVSDFYPLLKAELFMGIKDLPSYVNQVLDLLIEQGLVQESDTLSVVTEHTSQMLLLAGSVSETLQRYAIIFNLLAHRPKMERSELESESHLLAQRLGALHGITAPEFYDKKLYNTLSVKLKELGYFSEKEDKSDVERIRDQANSLLRASVRQTIVASVTAEHIV.

The short motif at 308–313 (CHRSHM) is the HXXXXD motif element.

It belongs to the GPAT/DAPAT family.

The protein resides in the cell inner membrane. The enzyme catalyses sn-glycerol 3-phosphate + an acyl-CoA = a 1-acyl-sn-glycero-3-phosphate + CoA. The protein operates within phospholipid metabolism; CDP-diacylglycerol biosynthesis; CDP-diacylglycerol from sn-glycerol 3-phosphate: step 1/3. The polypeptide is Glycerol-3-phosphate acyltransferase (Shewanella sp. (strain ANA-3)).